A 418-amino-acid polypeptide reads, in one-letter code: Putative F-box protein At3g23950 (418 aa).

The F-box domain occupies 1–42; the sequence is MNIPPELTFEVLVRLPLKSLARFRSMCKEWKLVIDSEFFRDC.

This Arabidopsis thaliana (Mouse-ear cress) protein is Putative F-box protein At3g23950.